Consider the following 446-residue polypeptide: Sensor protein PfeS (446 aa).

Topologically, residues 1–9 are cytoplasmic; sequence MRRHPLLWK. A helical membrane pass occupies residues 10–30; that stretch reads LALLQVGFCLLLTWLIYTWGL. Residues 31-155 lie on the Periplasmic side of the membrane; that stretch reads SVERSTYFLA…LLPGGLTPWT (125 aa). A helical membrane pass occupies residues 156–176; it reads HLVTHGIVPTLLAALLGLLLY. An HAMP domain is found at 177–233; that stretch reads RHLVVPLNRLRDRADALRADELESTPLAAPLAARRDELGELAQALEHMAERLRLSLA. Over 177 to 446 the chain is Cytoplasmic; the sequence is RHLVVPLNRL…CLHLWLPAAA (270 aa). Positions 241 to 446 constitute a Histidine kinase domain; sequence TLSHELRTPL…CLHLWLPAAA (206 aa). H244 is subject to Phosphohistidine; by autocatalysis.

The protein localises to the cell inner membrane. The enzyme catalyses ATP + protein L-histidine = ADP + protein N-phospho-L-histidine.. Its function is as follows. Member of the two-component regulatory system PfeR/PfeS. May activate PfeR by phosphorylation. The sequence is that of Sensor protein PfeS (pfeS) from Pseudomonas aeruginosa (strain ATCC 15692 / DSM 22644 / CIP 104116 / JCM 14847 / LMG 12228 / 1C / PRS 101 / PAO1).